The sequence spans 894 residues: Alpha-actinin-2 (894 aa).

The actin-binding stretch occupies residues 1-254; it reads MNQIEPGVQY…IMTYVSCFYH (254 aa). 2 consecutive Calponin-homology (CH) domains span residues 38–142 and 151–257; these read KQQR…LRFA and TSAK…HAFA. Threonine 237 bears the Phosphothreonine mark. Spectrin repeat units lie at residues 281–391, 401–506, 516–627, and 637–740; these read RLME…WLLN, HLAE…ALER, QLHL…SLQE, and RLRR…EVET. 2 consecutive EF-hand domains span residues 753–788 and 789–824; these read EQMN…MGYD and LGEA…ETAD. Residues aspartate 766, asparagine 770, aspartate 777, aspartate 802, asparagine 804, and threonine 808 each coordinate Ca(2+).

Belongs to the alpha-actinin family. In terms of assembly, homodimer; antiparallel. Also forms heterodimers with ACTN3. Interacts with ADAM12, MYOZ1, MYOZ2 and MYOZ3. Interacts via its C-terminal region with the LDB3 PDZ domain. Interacts with XIRP2. Interacts with DST (via N-terminus). Interacts with PARVB. Interacts with SYNPO2. In terms of processing, ubiquitinated by FBXL22, leading to proteasomal degradation.

It is found in the cytoplasm. The protein resides in the myofibril. The protein localises to the sarcomere. It localises to the z line. F-actin cross-linking protein which is thought to anchor actin to a variety of intracellular structures. This is a bundling protein. The polypeptide is Alpha-actinin-2 (Actn2) (Mus musculus (Mouse)).